Here is a 570-residue protein sequence, read N- to C-terminus: MNEKHPGPLVVEGKLTDAERMKLESNYLRGTIAEDLNDGLTGGFKGDNFLLIRFHGMYQQDDRDIRAERAEQKLEPRHAMLLRCRLPGGVITTKQWQAIDKFAGENTIYGSIRLTNRQTFQFHGILKKNVKPVHQMLHSVGLDALATANDMNRNVLCTSNPYESQLHAEAYEWAKKISEHLLPRTRAYAEIWLDQEKVATTDEEPILGQTYLPRKFKTTVVIPPQNDIDLHANDMNFVAIAENGKLVGFNLLVGGGLSIEHGNKKTYARTASEFGYLPLEHTLAVAEAVVTTQRDWGNRTDRKNAKTKYTLERVGVETFKAEVERRAGIKFEPIRPYEFTGRGDRIGWVKGIDDKWHLTLFIENGRILDYPGRPLKTGLLEIAKIHKGDFRITANQNLIIAGVPESEKAKIEKIAKESGLMNAVTPQRENSMACVSFPTCPLAMAEAERFLPSFIDNIDNLMAKHGVSDEHIVMRVTGCPNGCGRAMLAEVGLVGKAPGRYNLHLGGNRIGTRIPRMHKENITEPEILATLDELIGRWAKEREAGEGFGDFTVRAGIIRPVLDPARDLWD.

Residues cysteine 434, cysteine 440, cysteine 479, and cysteine 483 each contribute to the [4Fe-4S] cluster site. Cysteine 483 contributes to the siroheme binding site.

This sequence belongs to the nitrite and sulfite reductase 4Fe-4S domain family. In terms of assembly, alpha(8)-beta(8). The alpha component is a flavoprotein, the beta component is a hemoprotein. It depends on siroheme as a cofactor. The cofactor is [4Fe-4S] cluster.

The catalysed reaction is hydrogen sulfide + 3 NADP(+) + 3 H2O = sulfite + 3 NADPH + 4 H(+). It participates in sulfur metabolism; hydrogen sulfide biosynthesis; hydrogen sulfide from sulfite (NADPH route): step 1/1. In terms of biological role, component of the sulfite reductase complex that catalyzes the 6-electron reduction of sulfite to sulfide. This is one of several activities required for the biosynthesis of L-cysteine from sulfate. The chain is Sulfite reductase [NADPH] hemoprotein beta-component from Escherichia fergusonii (strain ATCC 35469 / DSM 13698 / CCUG 18766 / IAM 14443 / JCM 21226 / LMG 7866 / NBRC 102419 / NCTC 12128 / CDC 0568-73).